A 612-amino-acid chain; its full sequence is DEAD-box ATP-dependent RNA helicase 11 (612 aa).

Disordered stretches follow at residues 1–70 (MSAS…SGGG) and 83–104 (GAGG…WDRR). Serine 2 carries the N-acetylserine modification. 2 stretches are compositionally biased toward gly residues: residues 61–70 (SGGGGASGGG) and 83–94 (GAGGGGGGGGGW). A Q motif motif is present at residues 151 to 179 (NTFADIDLGDALNLNIRRCKYVRPTPVQR). One can recognise a Helicase ATP-binding domain in the interval 182–366 (IPILLAERDL…ADFMSNYIFL (185 aa)). Residue 195-202 (AQTGSGKT) participates in ATP binding. A DEAD box motif is present at residues 310-313 (DEAD). In terms of domain architecture, Helicase C-terminal spans 377–542 (LITQRVEFVQ…EVPEWLTRYA (166 aa)). Residues 547–583 (FGGGKKRSGGRFGGRDFRREGSYSRGGGGGGGGGGSD) form a disordered region. Basic and acidic residues predominate over residues 559–568 (GGRDFRREGS). The span at 570–583 (SRGGGGGGGGGGSD) shows a compositional bias: gly residues.

The protein belongs to the DEAD box helicase family. DDX3/DED1 subfamily.

It carries out the reaction ATP + H2O = ADP + phosphate + H(+). This is DEAD-box ATP-dependent RNA helicase 11 (RH11) from Arabidopsis thaliana (Mouse-ear cress).